Consider the following 721-residue polypeptide: Tripartite terminase subunit 1 (721 aa).

The C3H1-type zinc finger occupies 189–217; that stretch reads CLKCYEELSLVPNQGKSIRKRLAGKFCNH. 625 to 632 is a binding site for ATP; that stretch reads YNDVFGKQ.

Belongs to the herpesviridae TRM1 protein family. In terms of assembly, associates with TRM2 and TRM3 to form the tripartite terminase complex. Interacts with portal protein.

It is found in the host nucleus. Functionally, component of the molecular motor that translocates viral genomic DNA in empty capsid during DNA packaging. Forms a tripartite terminase complex together with TRM2 and TRM3 in the host cytoplasm. Once the complex reaches the host nucleus, it interacts with the capsid portal vertex. This portal forms a ring in which genomic DNA is translocated into the capsid. TRM1 carries an endonuclease activity that plays an important role for the cleavage of concatemeric viral DNA into unit length genomes. This Homo sapiens (Human) protein is Tripartite terminase subunit 1.